Consider the following 1018-residue polypeptide: UPF0182 protein Francci3_3781 (1018 aa).

The next 7 helical transmembrane spans lie at 13–33 (TKVLVPVLLVIVLAITIIAIF), 60–80 (ILLFVLFGVVMAIIVGTNIVL), 109–129 (MLLILLAVTTLFGLAAGLSAA), 167–187 (FLLGFLLTAVLLSLLVTLLTH), 208–228 (AHISVLLGLLALLKAWAYYLD), 250–270 (AVLPAKLILLFISLACAVLFI), and 283–303 (LGAGILVLSSVVIGGIYPAIV). 2 stretches are compositionally biased toward low complexity: residues 886–896 (TTDAGQDGTPA) and 960–980 (SSPAATPPAATATRAGASVPA). Disordered stretches follow at residues 886–920 (TTDAGQDGTPAPRSGQGGAGVPPPGQTALQDAVGD) and 960–1018 (SSPA…PAPG). A compositionally biased stretch (pro residues) spans 981-995 (SPVPASPAAKPPAPS).

It belongs to the UPF0182 family.

It localises to the cell membrane. The sequence is that of UPF0182 protein Francci3_3781 from Frankia casuarinae (strain DSM 45818 / CECT 9043 / HFP020203 / CcI3).